The sequence spans 357 residues: Glutamate 5-kinase (357 aa).

An ATP-binding site is contributed by lysine 7. Serine 43, aspartate 130, and asparagine 142 together coordinate substrate. Residue 162–163 coordinates ATP; sequence TD. The PUA domain maps to 270-347; that stretch reads QGELTLDAGA…PAAGPSPVVV (78 aa).

This sequence belongs to the glutamate 5-kinase family.

Its subcellular location is the cytoplasm. The enzyme catalyses L-glutamate + ATP = L-glutamyl 5-phosphate + ADP. Its pathway is amino-acid biosynthesis; L-proline biosynthesis; L-glutamate 5-semialdehyde from L-glutamate: step 1/2. Functionally, catalyzes the transfer of a phosphate group to glutamate to form L-glutamate 5-phosphate. The chain is Glutamate 5-kinase from Parasynechococcus marenigrum (strain WH8102).